The following is a 219-amino-acid chain: Vacuolar protein sorting-associated protein 20 homolog 1 (219 aa).

A coiled-coil region spans residues 20-60 (SLKTQRRKLGQYQQKLEKVIEAEKQAARDLIREKRKDRALL). A disordered region spans residues 171 to 219 (PEVPTKESEESEKLDLPDVPTKTPVASNAEITPAESATKTKVLEEPLPA). Basic and acidic residues predominate over residues 174-186 (PTKESEESEKLDL). Polar residues predominate over residues 194-209 (PVASNAEITPAESATK).

Belongs to the SNF7 family. Component of the endosomal sorting required for transport complex III (ESCRT-III), composed at least of VPS2, VPS20, VPS24 and VPS32. Interacts with SKD1.

Its subcellular location is the endosome. Functionally, component of the ESCRT-III complex, which is required for multivesicular bodies (MVBs) formation and sorting of endosomal cargo proteins into MVBs. The ESCRT-III complex is probably involved in the concentration of MVB cargo. The polypeptide is Vacuolar protein sorting-associated protein 20 homolog 1 (VPS20.1) (Arabidopsis thaliana (Mouse-ear cress)).